Here is a 301-residue protein sequence, read N- to C-terminus: ATP synthase gamma chain (301 aa).

The protein belongs to the ATPase gamma chain family. As to quaternary structure, F-type ATPases have 2 components, CF(1) - the catalytic core - and CF(0) - the membrane proton channel. CF(1) has five subunits: alpha(3), beta(3), gamma(1), delta(1), epsilon(1). CF(0) has three main subunits: a, b and c.

It localises to the cell inner membrane. In terms of biological role, produces ATP from ADP in the presence of a proton gradient across the membrane. The gamma chain is believed to be important in regulating ATPase activity and the flow of protons through the CF(0) complex. In Helicobacter pylori (strain ATCC 700392 / 26695) (Campylobacter pylori), this protein is ATP synthase gamma chain.